A 388-amino-acid chain; its full sequence is Leucine aminopeptidase 1 (388 aa).

Positions 1-19 are cleaved as a signal peptide; the sequence is MKVLTAIALSAIAFTGAVA. Positions 20 to 88 are excised as a propeptide; sequence AVITQEAFLN…YPTLHSASYV (69 aa). 2 N-linked (GlcNAc...) asparagine glycosylation sites follow: N106 and N180. Residues H188 and D207 each coordinate Zn(2+). N232 carries N-linked (GlcNAc...) asparagine glycosylation. Residues E246 and D273 each coordinate Zn(2+). An intrachain disulfide couples C322 to C326. A Zn(2+)-binding site is contributed by H355.

This sequence belongs to the peptidase M28 family. M28E subfamily. Monomer. The cofactor is Zn(2+).

It is found in the secreted. Functionally, extracellular aminopeptidase that allows assimilation of proteinaceous substrates and which contributes to pathogenicity. This chain is Leucine aminopeptidase 1 (lap1), found in Aspergillus fumigatus (strain CBS 144.89 / FGSC A1163 / CEA10) (Neosartorya fumigata).